The chain runs to 41 residues: MKVRNSLKSLRGRHRDNQLVRRKGRVYIINKTQKRYKARQG.

The protein belongs to the bacterial ribosomal protein bL36 family.

This Methylocella silvestris (strain DSM 15510 / CIP 108128 / LMG 27833 / NCIMB 13906 / BL2) protein is Large ribosomal subunit protein bL36.